The primary structure comprises 87 residues: Small ribosomal subunit protein bS20 (87 aa).

This sequence belongs to the bacterial ribosomal protein bS20 family.

Its function is as follows. Binds directly to 16S ribosomal RNA. This is Small ribosomal subunit protein bS20 from Alkaliphilus oremlandii (strain OhILAs) (Clostridium oremlandii (strain OhILAs)).